Consider the following 484-residue polypeptide: Probable UDP-N-acetylglucosamine pyrophosphorylase (484 aa).

A Substrate binding motif is present at residues 107–110 (LAGG). UTP is bound by residues 107 to 110 (LAGG), Lys121, Gln200, and Gly226. Substrate is bound at residue Asn227. Position 255 (Asp255) interacts with UTP. Positions 304–305 (EY) match the Substrate binding motif. A UTP-binding site is contributed by Lys377. Substrate is bound at residue Lys407.

Belongs to the UDPGP type 1 family.

It is found in the cytoplasm. The catalysed reaction is N-acetyl-alpha-D-glucosamine 1-phosphate + UTP + H(+) = UDP-N-acetyl-alpha-D-glucosamine + diphosphate. It functions in the pathway nucleotide-sugar biosynthesis; UDP-N-acetyl-alpha-D-glucosamine biosynthesis; UDP-N-acetyl-alpha-D-glucosamine from N-acetyl-alpha-D-glucosamine 1-phosphate: step 1/1. This chain is Probable UDP-N-acetylglucosamine pyrophosphorylase, found in Caenorhabditis elegans.